The following is a 273-amino-acid chain: Undecaprenyl-diphosphatase (273 aa).

7 helical membrane-spanning segments follow: residues 4–24, 43–63, 82–102, 108–128, 183–203, 217–237, and 248–268; these read LILL…FLPI, KAKV…CWEY, FVIN…LFIK, LFHP…ILWA, AAEF…FYDV, MFAT…RGFI, and FAWY…SGLV.

Belongs to the UppP family.

It is found in the cell inner membrane. It carries out the reaction di-trans,octa-cis-undecaprenyl diphosphate + H2O = di-trans,octa-cis-undecaprenyl phosphate + phosphate + H(+). In terms of biological role, catalyzes the dephosphorylation of undecaprenyl diphosphate (UPP). Confers resistance to bacitracin. This is Undecaprenyl-diphosphatase from Nitrosomonas europaea (strain ATCC 19718 / CIP 103999 / KCTC 2705 / NBRC 14298).